We begin with the raw amino-acid sequence, 343 residues long: S-adenosylmethionine:tRNA ribosyltransferase-isomerase (343 aa).

The protein belongs to the QueA family. As to quaternary structure, monomer.

The protein localises to the cytoplasm. The catalysed reaction is 7-aminomethyl-7-carbaguanosine(34) in tRNA + S-adenosyl-L-methionine = epoxyqueuosine(34) in tRNA + adenine + L-methionine + 2 H(+). It participates in tRNA modification; tRNA-queuosine biosynthesis. In terms of biological role, transfers and isomerizes the ribose moiety from AdoMet to the 7-aminomethyl group of 7-deazaguanine (preQ1-tRNA) to give epoxyqueuosine (oQ-tRNA). The polypeptide is S-adenosylmethionine:tRNA ribosyltransferase-isomerase (Coxiella burnetii (strain Dugway 5J108-111)).